The following is a 539-amino-acid chain: Phosphoenolpyruvate carboxykinase (ATP) (539 aa).

Substrate is bound by residues R64, Y206, and K212. Residues K212, H231, and G247–T255 each bind ATP. The Mn(2+) site is built by K212 and H231. D268 serves as a coordination point for Mn(2+). Residues E296, R332, R448–I449, and T454 each bind ATP. A substrate-binding site is contributed by R332.

It belongs to the phosphoenolpyruvate carboxykinase (ATP) family. Monomer. Mn(2+) is required as a cofactor.

It localises to the cytoplasm. It carries out the reaction oxaloacetate + ATP = phosphoenolpyruvate + ADP + CO2. Its pathway is carbohydrate biosynthesis; gluconeogenesis. In terms of biological role, involved in the gluconeogenesis. Catalyzes the conversion of oxaloacetate (OAA) to phosphoenolpyruvate (PEP) through direct phosphoryl transfer between the nucleoside triphosphate and OAA. This is Phosphoenolpyruvate carboxykinase (ATP) from Yersinia pseudotuberculosis serotype IB (strain PB1/+).